Here is a 309-residue protein sequence, read N- to C-terminus: Porphobilinogen deaminase (309 aa).

Cys-240 carries the post-translational modification S-(dipyrrolylmethanemethyl)cysteine.

The protein belongs to the HMBS family. As to quaternary structure, monomer. The cofactor is dipyrromethane.

It catalyses the reaction 4 porphobilinogen + H2O = hydroxymethylbilane + 4 NH4(+). It functions in the pathway porphyrin-containing compound metabolism; protoporphyrin-IX biosynthesis; coproporphyrinogen-III from 5-aminolevulinate: step 2/4. Functionally, tetrapolymerization of the monopyrrole PBG into the hydroxymethylbilane pre-uroporphyrinogen in several discrete steps. The protein is Porphobilinogen deaminase of Chromobacterium violaceum (strain ATCC 12472 / DSM 30191 / JCM 1249 / CCUG 213 / NBRC 12614 / NCIMB 9131 / NCTC 9757 / MK).